Here is a 511-residue protein sequence, read N- to C-terminus: MSEYLLEMRNIGKEFNGVKALDGIYLKVRAGECVELCGENGAGKSTLMKVPSGVYPHGTWTGEIFWEGKELKASGIRDTEAAGIVIIHQELMMVPHLSVAENIFLGCEPTTGGFIDYDQMNARAAELLARLKINDINVALPVYHYSGGKQQLIEIAKAINKNAKLLILDEPTSALTASETRVLIDLIKDFKKQGMACVYISHKLDEVAEISDTVTVIRDGAHIATRPMSELTTPDIITMMVGREMKNLFPREPHDIGEVMFEARNISCWDVTNPGRKVVDDVSFALRRGEILGIAGLVGAGRTELVSSLFGVWPGACQGQVFLEGKEIKIRTPRDAVRQGICMVPEDHKRDGILPIMPVGHNMTISVLDRFSLRGLIDKDAELVAIQREILRLKVKTADPMLAIASLSGGNQQKAVLSKMMLPDPKVLILDEPTRGVDVGAKYEIYKLIFALARQGVSILMVSSEMPEVLGISDRVLVIGEGKLRGDFPNENLTQEKVLAAAIGKPATNAA.

ABC transporter domains lie at 6–244 and 261–506; these read LEMR…VGRE and FEAR…IGKP. 38 to 45 is an ATP binding site; the sequence is GENGAGKS.

The protein belongs to the ABC transporter superfamily. Xylose importer (TC 3.A.1.2.4) family. As to quaternary structure, the complex is composed of two ATP-binding proteins (XylG), two transmembrane proteins (XylH) and a solute-binding protein (XylF).

It localises to the cell inner membrane. The catalysed reaction is D-xylose(out) + ATP + H2O = D-xylose(in) + ADP + phosphate + H(+). Its function is as follows. Part of the ABC transporter complex XylFGH involved in xylose import. Responsible for energy coupling to the transport system. The polypeptide is Xylose import ATP-binding protein XylG (Brucella suis biovar 1 (strain 1330)).